The sequence spans 62 residues: Teretoxin Tsu1.1 (62 aa).

Residues 1–21 (MSCFPVLFVMMLLASQSVWAF) form the signal peptide. Positions 22-40 (PEPETRIGTARDAESMGVR) are excised as a propeptide.

Belongs to the teretoxin A (TA) superfamily. Contains 2 disulfide bonds. As to expression, expressed by the venom duct.

The protein resides in the secreted. This chain is Teretoxin Tsu1.1, found in Terebra subulata (Chocolate spotted auger).